The primary structure comprises 432 residues: 3-phosphoshikimate 1-carboxyvinyltransferase (432 aa).

3-phosphoshikimate-binding residues include Lys-23, Ser-24, and Arg-28. Phosphoenolpyruvate is bound at residue Lys-23. Residues Gly-95 and Arg-123 each coordinate phosphoenolpyruvate. The 3-phosphoshikimate site is built by Ser-167, Gln-169, Asp-317, and Lys-344. Gln-169 contributes to the phosphoenolpyruvate binding site. The active-site Proton acceptor is the Asp-317. Arg-348 and Arg-390 together coordinate phosphoenolpyruvate.

The protein belongs to the EPSP synthase family. Monomer.

The protein localises to the cytoplasm. The catalysed reaction is 3-phosphoshikimate + phosphoenolpyruvate = 5-O-(1-carboxyvinyl)-3-phosphoshikimate + phosphate. Its pathway is metabolic intermediate biosynthesis; chorismate biosynthesis; chorismate from D-erythrose 4-phosphate and phosphoenolpyruvate: step 6/7. Functionally, catalyzes the transfer of the enolpyruvyl moiety of phosphoenolpyruvate (PEP) to the 5-hydroxyl of shikimate-3-phosphate (S3P) to produce enolpyruvyl shikimate-3-phosphate and inorganic phosphate. This chain is 3-phosphoshikimate 1-carboxyvinyltransferase, found in Staphylococcus aureus (strain COL).